The primary structure comprises 435 residues: Xylose isomerase (435 aa).

Catalysis depends on residues histidine 100 and aspartate 103. Residues glutamate 231, glutamate 267, histidine 270, aspartate 295, aspartate 306, aspartate 308, and aspartate 338 each contribute to the Mg(2+) site.

It belongs to the xylose isomerase family. In terms of assembly, homotetramer. Mg(2+) serves as cofactor.

Its subcellular location is the cytoplasm. The enzyme catalyses alpha-D-xylose = alpha-D-xylulofuranose. The sequence is that of Xylose isomerase from Brucella suis biovar 1 (strain 1330).